Here is a 216-residue protein sequence, read N- to C-terminus: Redox-sensing transcriptional repressor Rex (216 aa).

Positions V16 to F55 form a DNA-binding region, H-T-H motif. G90–G95 provides a ligand contact to NAD(+).

It belongs to the transcriptional regulatory Rex family. As to quaternary structure, homodimer.

It localises to the cytoplasm. Its function is as follows. Modulates transcription in response to changes in cellular NADH/NAD(+) redox state. This is Redox-sensing transcriptional repressor Rex from Limosilactobacillus fermentum (strain NBRC 3956 / LMG 18251) (Lactobacillus fermentum).